The sequence spans 130 residues: uncharacterized protein (130 aa).

The helical transmembrane segment at leucine 15–alanine 31 threads the bilayer.

Its subcellular location is the membrane. This is an uncharacterized protein from Saccharomyces cerevisiae (strain ATCC 204508 / S288c) (Baker's yeast).